Consider the following 141-residue polypeptide: Nucleoside triphosphatase NudI (141 aa).

A Nudix hydrolase domain is found at 1-141; that stretch reads MRQRTIVCPL…RHTLALKGLL (141 aa). The Nudix box motif lies at 38–59; sequence GGVEPGERIEEALRREIREELG.

Belongs to the Nudix hydrolase family. NudI subfamily. Monomer. It depends on Mg(2+) as a cofactor.

It carries out the reaction a ribonucleoside 5'-triphosphate + H2O = a ribonucleoside 5'-phosphate + diphosphate + H(+). The enzyme catalyses a 2'-deoxyribonucleoside 5'-triphosphate + H2O = a 2'-deoxyribonucleoside 5'-phosphate + diphosphate + H(+). It catalyses the reaction dUTP + H2O = dUMP + diphosphate + H(+). The catalysed reaction is dTTP + H2O = dTMP + diphosphate + H(+). It carries out the reaction dCTP + H2O = dCMP + diphosphate + H(+). Its function is as follows. Catalyzes the hydrolysis of nucleoside triphosphates, with a preference for pyrimidine deoxynucleoside triphosphates (dUTP, dTTP and dCTP). The polypeptide is Nucleoside triphosphatase NudI (Salmonella newport (strain SL254)).